Consider the following 432-residue polypeptide: Adenylosuccinate synthetase (432 aa).

Residues 13 to 19 (GDEGKGK) and 41 to 43 (GHT) each bind GTP. The active-site Proton acceptor is D14. 2 residues coordinate Mg(2+): D14 and G41. Residues 14–17 (DEGK), 39–42 (NAGH), T130, R144, Q225, T240, and R304 contribute to the IMP site. H42 (proton donor) is an active-site residue. 300–306 (ATTGRRR) contributes to the substrate binding site. Residues R306, 332-334 (KLD), and 415-417 (STG) each bind GTP.

Belongs to the adenylosuccinate synthetase family. In terms of assembly, homodimer. The cofactor is Mg(2+).

The protein resides in the cytoplasm. The catalysed reaction is IMP + L-aspartate + GTP = N(6)-(1,2-dicarboxyethyl)-AMP + GDP + phosphate + 2 H(+). It functions in the pathway purine metabolism; AMP biosynthesis via de novo pathway; AMP from IMP: step 1/2. Functionally, plays an important role in the de novo pathway of purine nucleotide biosynthesis. Catalyzes the first committed step in the biosynthesis of AMP from IMP. The polypeptide is Adenylosuccinate synthetase (Escherichia coli (strain K12)).